Reading from the N-terminus, the 229-residue chain is Putative germin-like protein subfamily 1 member 2 (229 aa).

The N-terminal stretch at 1–24 (MKGLVQFLVAKIILLVLASTFVHC) is a signal peptide. Cysteines 34 and 50 form a disulfide. 2 N-linked (GlcNAc...) asparagine glycosylation sites follow: Asn38 and Asn71. Positions 64 to 215 (SGLNIPGNTS…AFALDVNIVR (152 aa)) constitute a Cupin type-1 domain. Residues His112 and His114 each contribute to the Mn(2+) site. Asn139 carries an N-linked (GlcNAc...) asparagine glycan. Position 163 (His163) interacts with Mn(2+).

This sequence belongs to the germin family. Oligomer (believed to be a pentamer but probably hexamer).

It localises to the secreted. It is found in the extracellular space. Its subcellular location is the apoplast. May play a role in plant defense. Probably has no oxalate oxidase activity even if the active site is conserved. The polypeptide is Putative germin-like protein subfamily 1 member 2 (Arabidopsis thaliana (Mouse-ear cress)).